The chain runs to 445 residues: Xylose isomerase (445 aa).

Residues His-107 and Asp-110 contribute to the active site. Glu-238, Glu-274, His-277, Asp-302, Asp-313, Asp-315, and Asp-345 together coordinate Mg(2+).

It belongs to the xylose isomerase family. Homotetramer. It depends on Mg(2+) as a cofactor.

It is found in the cytoplasm. The enzyme catalyses alpha-D-xylose = alpha-D-xylulofuranose. This Priestia megaterium (strain DSM 319 / IMG 1521) (Bacillus megaterium) protein is Xylose isomerase (xylA).